Reading from the N-terminus, the 273-residue chain is Eukaryotic translation initiation factor 3 subunit G-2 (273 aa).

One can recognise an RRM domain in the interval 193–271; sequence SAVRISNLSE…LILCVEWSKP (79 aa).

The protein belongs to the eIF-3 subunit G family. In terms of assembly, component of the eukaryotic translation initiation factor 3 (eIF-3) complex. The eIF-3 complex interacts with pix.

The protein localises to the cytoplasm. Its function is as follows. RNA-binding component of the eukaryotic translation initiation factor 3 (eIF-3) complex, which is involved in protein synthesis of a specialized repertoire of mRNAs and, together with other initiation factors, stimulates binding of mRNA and methionyl-tRNAi to the 40S ribosome. The eIF-3 complex specifically targets and initiates translation of a subset of mRNAs involved in cell proliferation. This subunit can bind 18S rRNA. The sequence is that of Eukaryotic translation initiation factor 3 subunit G-2 from Drosophila simulans (Fruit fly).